A 151-amino-acid chain; its full sequence is DPEWHTLDAHEVEQVQATWKAVSHDEVEILYTVFKAHPDIMAKFPKFAGKDLEAIKDTADFAVHASRIIGFFGEYVTLLGSSGNQAAIRTLLHDLGVFHKTRGITKAQFGEFRETMTAYLKGHNKWNADISHSWDDAFDKAFSVIFEVLES.

The Globin domain occupies 6-150 (TLDAHEVEQV…AFSVIFEVLE (145 aa)). Positions 64 and 99 each coordinate heme b.

It belongs to the globin family. Homodimer.

This chain is Globin CTT-X (CTT-10), found in Chironomus thummi thummi (Midge).